A 176-amino-acid chain; its full sequence is ATP synthase subunit b 2 (176 aa).

Residues 29 to 49 (IFWLVITLVIIYMVLSKVALP) traverse the membrane as a helical segment.

Belongs to the ATPase B chain family. F-type ATPases have 2 components, F(1) - the catalytic core - and F(0) - the membrane proton channel. F(1) has five subunits: alpha(3), beta(3), gamma(1), delta(1), epsilon(1). F(0) has three main subunits: a(1), b(2) and c(10-14). The alpha and beta chains form an alternating ring which encloses part of the gamma chain. F(1) is attached to F(0) by a central stalk formed by the gamma and epsilon chains, while a peripheral stalk is formed by the delta and b chains.

Its subcellular location is the cell inner membrane. F(1)F(0) ATP synthase produces ATP from ADP in the presence of a proton or sodium gradient. F-type ATPases consist of two structural domains, F(1) containing the extramembraneous catalytic core and F(0) containing the membrane proton channel, linked together by a central stalk and a peripheral stalk. During catalysis, ATP synthesis in the catalytic domain of F(1) is coupled via a rotary mechanism of the central stalk subunits to proton translocation. Functionally, component of the F(0) channel, it forms part of the peripheral stalk, linking F(1) to F(0). The b'-subunit is a diverged and duplicated form of b found in plants and photosynthetic bacteria. The protein is ATP synthase subunit b 2 (atpF2) of Roseobacter denitrificans (strain ATCC 33942 / OCh 114) (Erythrobacter sp. (strain OCh 114)).